A 271-amino-acid chain; its full sequence is Urease accessory protein UreD (271 aa).

Belongs to the UreD family. As to quaternary structure, ureD, UreF and UreG form a complex that acts as a GTP-hydrolysis-dependent molecular chaperone, activating the urease apoprotein by helping to assemble the nickel containing metallocenter of UreC. The UreE protein probably delivers the nickel.

The protein resides in the cytoplasm. Required for maturation of urease via the functional incorporation of the urease nickel metallocenter. The polypeptide is Urease accessory protein UreD (Haemophilus influenzae (strain PittEE)).